Consider the following 233-residue polypeptide: Snake venom serine protease BthaTL (233 aa).

In terms of domain architecture, Peptidase S1 spans 1-224 (VIGGDECDIN…YLPWIQSIIA (224 aa)). 6 disulfides stabilise this stretch: cysteine 7-cysteine 138, cysteine 25-cysteine 41, cysteine 73-cysteine 231, cysteine 117-cysteine 185, cysteine 149-cysteine 164, and cysteine 175-cysteine 200. Catalysis depends on charge relay system residues histidine 40 and aspartate 85. Serine 179 acts as the Charge relay system in catalysis.

The protein belongs to the peptidase S1 family. Snake venom subfamily. Monomer. Expressed by the venom gland.

Its subcellular location is the secreted. Snake venom serine protease that may act in the hemostasis system of the prey. The polypeptide is Snake venom serine protease BthaTL (Bothrops alternatus (Urutu)).